Consider the following 106-residue polypeptide: ATP-dependent Clp protease adapter protein ClpS (106 aa).

It belongs to the ClpS family. In terms of assembly, binds to the N-terminal domain of the chaperone ClpA.

In terms of biological role, involved in the modulation of the specificity of the ClpAP-mediated ATP-dependent protein degradation. This is ATP-dependent Clp protease adapter protein ClpS from Erwinia tasmaniensis (strain DSM 17950 / CFBP 7177 / CIP 109463 / NCPPB 4357 / Et1/99).